The primary structure comprises 547 residues: Pyochelin synthase PchD (547 aa).

The protein belongs to the ATP-dependent AMP-binding enzyme family.

The enzyme catalyses salicylate + holo-[ACP] + ATP = salicyl-[ACP] + AMP + diphosphate. Its pathway is siderophore biosynthesis. It participates in antifungal biosynthesis. In terms of biological role, involved in the biosynthesis of the siderophore pyochelin. Specifically adenylates salicylate and loads it onto the holo form of PchE via a thioester linkage to the phosphopanthetheine moiety. Is also involved in the synthesis of the antifungal antibiotic dihydroaeruginoic acid (Dha or hydroxyphenyl-thiazolinyl-carboxylate), a precursor of pyochelin. The polypeptide is Pyochelin synthase PchD (Pseudomonas aeruginosa (strain UCBPP-PA14)).